The sequence spans 526 residues: Lycopene epsilon cyclase, chloroplastic (526 aa).

108–136 (LVVIGCGPAGLALAAESAKLGLNVGLVGP) lines the NAD(+) pocket. Helical transmembrane passes span 443–463 (FFLF…RSFF) and 477–497 (FLGS…MFII).

It belongs to the lycopene cyclase family.

It localises to the plastid. The protein localises to the chloroplast membrane. The catalysed reaction is a carotenoid psi-end group = a carotenoid epsilon-end group. Its pathway is carotenoid biosynthesis; alpha-zeacarotene biosynthesis. The protein operates within carotenoid biosynthesis; delta-carotene biosynthesis. Functionally, catalyzes the single cyclization reaction which converts lycopene to delta-carotene and neurosporene to alpha-zeacarotene. Required for lutein biosynthesis. In Solanum lycopersicum (Tomato), this protein is Lycopene epsilon cyclase, chloroplastic.